The chain runs to 665 residues: Prelamin-A/C (665 aa).

M1 bears the N-acetylmethionine mark. The segment at 1 to 25 is disordered; that stretch reads METPSQRRATRSGAQASSTPLSPTR. The tract at residues 1-33 is head; sequence METPSQRRATRSGAQASSTPLSPTRITRLQEKE. Positions 1 to 130 are interaction with MLIP; sequence METPSQRRAT…TKKEGDLLAA (130 aa). T3 carries the phosphothreonine modification. S5 is modified (phosphoserine). T10 is modified (phosphothreonine). A phosphoserine mark is found at S12 and S18. T19 bears the Phosphothreonine mark. A Phosphoserine modification is found at S22. One can recognise an IF rod domain in the interval 31–387; it reads EKEDLQELND…KLLEGEEERL (357 aa). K32 carries the post-translational modification N6-acetyllysine; alternate. Position 32 is an N6-succinyllysine; alternate (K32). Residue K32 forms a Glycyl lysine isopeptide (Lys-Gly) (interchain with G-Cter in SUMO2); alternate linkage. The segment at 34 to 70 is coil 1A; that stretch reads DLQELNDRLAVYIDRVRSLETENAGLRLRITESEEVV. Phosphoserine is present on residues S51, S66, and S71. Residues 71-80 are linker 1; sequence SREVSGIKAA. Residues K78 and K97 each carry the N6-acetyllysine modification. The interval 81–218 is coil 1B; the sequence is YEAELGDARK…NIYSEELRET (138 aa). K97 is covalently cross-linked (Glycyl lysine isopeptide (Lys-Gly) (interchain with G-Cter in SUMO2)). S107 bears the Phosphoserine mark. N6-acetyllysine occurs at positions 108, 114, 123, 135, 144, and 155. Residue K171 is modified to N6-acetyllysine; alternate. At K171 the chain carries N6-succinyllysine; alternate. K171 is covalently cross-linked (Glycyl lysine isopeptide (Lys-Gly) (interchain with G-Cter in SUMO2); alternate). Residues K180, K201, and K208 each carry the N6-acetyllysine modification. K201 is covalently cross-linked (Glycyl lysine isopeptide (Lys-Gly) (interchain with G-Cter in SUMO2); alternate). K201 is covalently cross-linked (Glycyl lysine isopeptide (Lys-Gly) (interchain with G-Cter in SUMO); alternate). K208 is covalently cross-linked (Glycyl lysine isopeptide (Lys-Gly) (interchain with G-Cter in SUMO2)). At S212 the chain carries Phosphoserine. Glycyl lysine isopeptide (Lys-Gly) (interchain with G-Cter in SUMO2) cross-links involve residues K219 and K233. Positions 219–242 are linker 2; it reads KRRHETRLVEIDNGKQREFESRLA. An N6-acetyllysine mark is found at K233, K260, K265, and K270. Positions 243-383 are coil 2; sequence DALQELRAQH…HAYRKLLEGE (141 aa). Residue K260 forms a Glycyl lysine isopeptide (Lys-Gly) (interchain with G-Cter in SUMO2); alternate linkage. Residue K270 forms a Glycyl lysine isopeptide (Lys-Gly) (interchain with G-Cter in SUMO2); alternate linkage. Phosphoserine is present on residues S277, S282, S301, and S307. Residue K311 forms a Glycyl lysine isopeptide (Lys-Gly) (interchain with G-Cter in SUMO2); alternate linkage. N6-acetyllysine occurs at positions 311, 316, and 341. Residues K366 and K378 each participate in a glycyl lysine isopeptide (Lys-Gly) (interchain with G-Cter in SUMO2) cross-link. The tract at residues 384-442 is disordered; it reads EERLRLSPSPTSQRSRGRASSHSSQSQGGGSVTKKRKLESSESRSSFSQHARTSGRVAV. Positions 384-665 are tail; that stretch reads EERLRLSPSP…SQSSQNCSIM (282 aa). Phosphoserine occurs at positions 390, 392, 395, 398, 403, 404, 406, 407, 409, and 414. Phosphoserine; by CDK1 is present on S392. Over residues 395–409 the composition is skewed to low complexity; sequence SQRSRGRASSHSSQS. T416 is modified (phosphothreonine). An N6-acetyllysine mark is found at K417 and K420. Residues K417 and K420 each participate in a glycyl lysine isopeptide (Lys-Gly) (interchain with G-Cter in SUMO2) cross-link. Residues 417–422 carry the Nuclear localization signal motif; that stretch reads KKRKLE. Phosphoserine is present on residues S423, S426, S429, and S431. The 118-residue stretch at 428-545 folds into the LTD domain; it reads SSFSQHARTS…EEVAMRKLVR (118 aa). Residue K450 forms a Glycyl lysine isopeptide (Lys-Gly) (interchain with G-Cter in SUMO2); alternate linkage. An N6-acetyllysine mark is found at K450 and K457. S458, E460, and S463 each carry phosphoserine. At K486 the chain carries N6-acetyllysine. K486 is covalently cross-linked (Glycyl lysine isopeptide (Lys-Gly) (interchain with G-Cter in SUMO2)). T496 carries the phosphothreonine modification. Phosphoserine is present on S500. Phosphothreonine occurs at positions 505 and 510. Phosphoserine is present on residues S533 and S546. At T548 the chain carries Phosphothreonine. Residues 553–577 are disordered; it reads NEDDDEDGEELLHHHRGSHCSGSGD. Phosphoserine is present on residues S570, C572, and S573. K599 participates in a covalent cross-link: Glycyl lysine isopeptide (Lys-Gly) (interchain with G-Cter in SUMO2); alternate. Residue K599 forms a Glycyl lysine isopeptide (Lys-Gly) (interchain with G-Cter in SUMO1); alternate linkage. A phosphoserine mark is found at S613, S614, S617, and S620. O-linked (GlcNAc) serine glycans are attached at residues S626 and S629. Phosphoserine occurs at positions 629, 633, 637, and 653. A propeptide spans 648 to 662 (removed in Lamin-A/C form); that stretch reads LLGNSSPRSQSSQNC. Residue C662 is modified to Cysteine methyl ester. C662 carries the S-farnesyl cysteine lipid modification. The propeptide at 663–665 is removed in Prelamin-A/C form and in Lamin-A/C form; that stretch reads SIM.

This sequence belongs to the intermediate filament family. As to quaternary structure, homodimer of lamin A and lamin C. Lamin dimers then assemble into dimeric head-to-tail polymers. Ultimately, two head-to-tail polymers assemble laterally into a protofilament with a uniformly shaped rod of 3.5 nm in diameter. Interacts with lamin-associated polypeptides IA, IB and TMPO-alpha, RB1 and with emerin. Proteolytically processed isoform A interacts with NARF. Interacts with SREBF1, SREBF2, SUN1, SUN2 and TMEM43. Interacts with TMEM201. Prelamin-A/C interacts with EMD. Interacts with DMPK; may regulate nuclear envelope stability. Interacts with MLIP. Interacts with SUV39H1; the interaction increases stability of SUV39H1. Interacts with ITSN1 isoform 2. Interacts with IFFO1; the interaction forms an interior nucleoskeleton and the recruitment to DNA double-strand breaks. Interacts with EMD. In terms of assembly, interacts (via C-terminus) with LEMD2 (via N-terminus) (in vitro). Post-translationally, proteolytic cleavage of the C-terminal of 18 residues of prelamin-A/C results in the production of lamin-A/C. The prelamin-A/C maturation pathway includes farnesylation of CAAX motif by protein farnesyltransferase (FNTA and FNTB), removal of the last three amino acids (-AAX) by RCE1/FACE2 and/or ZMPSTE24, methylation of the C-terminal cysteine by ICMT and endoproteolytic removal of the last 15 C-terminal amino acids by ZMPSTE24. Proteolytic cleavage requires prior farnesylation and methylation, and absence of these blocks cleavage. Farnesylation of prelamin-A/C facilitates nuclear envelope targeting. In terms of processing, phosphorylation plays a key role in lamin organization, subcellular localization and nuclear envelope disintegration. Phosphorylation by CDK1 at Ser-22 and Ser-392 at the onset of mitosis drives lamin disassembly and nuclear envelope breakdown. Phosphorylation at Ser-22 and Ser-392 during interphase promotes localization to the nucleoplasm and regulates lamina assembly. Phosphorylation at Ser-22, Ser-392 and Ser-629 during interphase causes redistribution between the nucleus and the cytoplasm. Phosphorylation at Ser-22 by CDK1 regulates matrix stiffness. Phosphorylation status of Ser-22 determines its localization between double-strand break (DSB) sites and the nuclear matrix. Phosphorylated by ATR at Ser-282 in response to DNA damage, leading to lamin disassembly and nuclear envelope rupture. Phosphorylation also regulates stability in micronuclei arising from genome instability: phosphorylation at Ser-395 by ATR in response to genome instability and double-stranded DNA breaks primes LMNA for subsequent phosphorylation at Ser-392 by CDK1 and micronuclei envelope rupture. The rupture of micronuclear envelope triggers the cGAS-STING pathway thereby activating the type I interferon response and innate immunity. Post-translationally, isoform C is phosphorylated on Ser-392, Ser-407 and Ser-409 at interphase. Acetylation by KAT8 is required for nuclear architecture. In terms of processing, sumoylation is necessary for the localization to the nuclear envelope. Post-translationally, the N-terminus is blocked. In terms of tissue distribution, expressed in liver and in bone marrow (at protein level). Expressed in cardiomyocytes. As to expression, specifically expressed in germ cells.

The protein resides in the nucleus lamina. It localises to the nucleus envelope. It is found in the nucleus. Its subcellular location is the nucleoplasm. The protein localises to the nucleus matrix. Its function is as follows. Lamins are intermediate filament proteins that assemble into a filamentous meshwork, and which constitute the major components of the nuclear lamina, a fibrous layer on the nucleoplasmic side of the inner nuclear membrane. Lamins provide a framework for the nuclear envelope, bridging the nuclear envelope and chromatin, thereby playing an important role in nuclear assembly, chromatin organization, nuclear membrane and telomere dynamics. Lamin A and C also regulate matrix stiffness by conferring nuclear mechanical properties. The structural integrity of the lamina is strictly controlled by the cell cycle, as seen by the disintegration and formation of the nuclear envelope in prophase and telophase, respectively. Lamin A and C are present in equal amounts in the lamina of mammals. Also invoved in DNA repair: recruited by DNA repair proteins XRCC4 and IFFO1 to the DNA double-strand breaks (DSBs) to prevent chromosome translocation by immobilizing broken DNA ends. Required for normal development of peripheral nervous system and skeletal muscle and for muscle satellite cell proliferation. Required for osteoblastogenesis and bone formation. Also prevents fat infiltration of muscle and bone marrow, helping to maintain the volume and strength of skeletal muscle and bone. Required for cardiac homeostasis. Prelamin-A/C can accelerate smooth muscle cell senescence. It acts to disrupt mitosis and induce DNA damage in vascular smooth muscle cells (VSMCs), leading to mitotic failure, genomic instability, and premature senescence. Functionally, isoform C2 may have a role in determining the organization of nuclear and chromosomal structures during spermatogenesis. This chain is Prelamin-A/C (Lmna), found in Mus musculus (Mouse).